Consider the following 243-residue polypeptide: Phosphatidylserine decarboxylase proenzyme (243 aa).

The Schiff-base intermediate with substrate; via pyruvic acid role is filled by S212. S212 is modified (pyruvic acid (Ser); by autocatalysis).

The protein belongs to the phosphatidylserine decarboxylase family. PSD-A subfamily. As to quaternary structure, heterodimer of a large membrane-associated beta subunit and a small pyruvoyl-containing alpha subunit. Requires pyruvate as cofactor. Post-translationally, is synthesized initially as an inactive proenzyme. Formation of the active enzyme involves a self-maturation process in which the active site pyruvoyl group is generated from an internal serine residue via an autocatalytic post-translational modification. Two non-identical subunits are generated from the proenzyme in this reaction, and the pyruvate is formed at the N-terminus of the alpha chain, which is derived from the carboxyl end of the proenzyme. The post-translation cleavage follows an unusual pathway, termed non-hydrolytic serinolysis, in which the side chain hydroxyl group of the serine supplies its oxygen atom to form the C-terminus of the beta chain, while the remainder of the serine residue undergoes an oxidative deamination to produce ammonia and the pyruvoyl prosthetic group on the alpha chain.

The protein resides in the cell membrane. It carries out the reaction a 1,2-diacyl-sn-glycero-3-phospho-L-serine + H(+) = a 1,2-diacyl-sn-glycero-3-phosphoethanolamine + CO2. The protein operates within phospholipid metabolism; phosphatidylethanolamine biosynthesis; phosphatidylethanolamine from CDP-diacylglycerol: step 2/2. In terms of biological role, catalyzes the formation of phosphatidylethanolamine (PtdEtn) from phosphatidylserine (PtdSer). In Mycobacterium leprae (strain Br4923), this protein is Phosphatidylserine decarboxylase proenzyme.